A 429-amino-acid polypeptide reads, in one-letter code: Adenylosuccinate synthetase (429 aa).

Residues 12–18 (GDEGKGK) and 40–42 (GHT) each bind GTP. Asp13 serves as the catalytic Proton acceptor. 2 residues coordinate Mg(2+): Asp13 and Gly40. Residues 13 to 16 (DEGK), 38 to 41 (NAGH), Thr128, Arg142, Gln223, Thr238, and Arg302 each bind IMP. Residue His41 is the Proton donor of the active site. Residue 298-304 (VNTGRPR) participates in substrate binding. GTP-binding positions include Arg304, 330-332 (KLD), and 412-414 (GVG).

This sequence belongs to the adenylosuccinate synthetase family. In terms of assembly, homodimer. Requires Mg(2+) as cofactor.

The protein resides in the cytoplasm. The enzyme catalyses IMP + L-aspartate + GTP = N(6)-(1,2-dicarboxyethyl)-AMP + GDP + phosphate + 2 H(+). It participates in purine metabolism; AMP biosynthesis via de novo pathway; AMP from IMP: step 1/2. Its function is as follows. Plays an important role in the de novo pathway of purine nucleotide biosynthesis. Catalyzes the first committed step in the biosynthesis of AMP from IMP. This chain is Adenylosuccinate synthetase, found in Arthrobacter sp. (strain FB24).